The sequence spans 437 residues: Trigger factor (437 aa).

In terms of domain architecture, PPIase FKBP-type spans 164-249; that stretch reads GDRVTIDFAG…LKSVEAPKLP (86 aa).

This sequence belongs to the FKBP-type PPIase family. Tig subfamily.

Its subcellular location is the cytoplasm. The catalysed reaction is [protein]-peptidylproline (omega=180) = [protein]-peptidylproline (omega=0). Involved in protein export. Acts as a chaperone by maintaining the newly synthesized protein in an open conformation. Functions as a peptidyl-prolyl cis-trans isomerase. This Azoarcus sp. (strain BH72) protein is Trigger factor.